The chain runs to 252 residues: Flagellar L-ring protein (252 aa).

Positions 1–25 (MLKLASLNRIVLTGTLLAAAGLASG) are cleaved as a signal peptide. Cys26 carries N-palmitoyl cysteine lipidation. Cys26 is lipidated: S-diacylglycerol cysteine.

It belongs to the FlgH family. As to quaternary structure, the basal body constitutes a major portion of the flagellar organelle and consists of four rings (L,P,S, and M) mounted on a central rod.

It is found in the cell outer membrane. The protein localises to the bacterial flagellum basal body. In terms of biological role, assembles around the rod to form the L-ring and probably protects the motor/basal body from shearing forces during rotation. This is Flagellar L-ring protein from Nitrobacter winogradskyi (strain ATCC 25391 / DSM 10237 / CIP 104748 / NCIMB 11846 / Nb-255).